Reading from the N-terminus, the 344-residue chain is Methionine synthase (344 aa).

Residues H211, C213, E236, and C315 each contribute to the Zn(2+) site.

Belongs to the archaeal MetE family. Requires Zn(2+) as cofactor.

It participates in amino-acid biosynthesis; L-methionine biosynthesis via de novo pathway. Catalyzes the transfer of a methyl group to L-homocysteine resulting in methionine formation. The physiological methyl donor is unknown. The sequence is that of Methionine synthase from Thermoplasma volcanium (strain ATCC 51530 / DSM 4299 / JCM 9571 / NBRC 15438 / GSS1).